The following is a 352-amino-acid chain: MEIDILSLFPDYFASPLQATILGRAIKQGALSVRSRDIREFGLGKWKQVDDSPYNGEGMLLMAEPVVQAIRSIRRKKSKVIYLSPQGQLLSAKKSRELASCSHLVLLCGHYEGIDERALTAEVDEEISIGDYVLTNGCAAALVLVDALARFIPGILGNQESAEYDSLENGLLEGPQYTRPRVFEGESVPEVLLCGDHQKIADWRKQVSLERTRERRPDLYLQYFYGNSACLSTQEDLPRIEVVSPKTFSVVLEVQDLRKAKKFYSRMFGKECWDGDKLFLLGKTSLYLQQTKETRGPTTVFIELETDHDFVRFLKRWEMLGGELGEQGTGGFPLRQVFDLDGHIWVVSCVQK.

Residues Gly-109 and 129-134 (IGDYVL) contribute to the S-adenosyl-L-methionine site.

Belongs to the RNA methyltransferase TrmD family. In terms of assembly, homodimer.

The protein localises to the cytoplasm. The catalysed reaction is guanosine(37) in tRNA + S-adenosyl-L-methionine = N(1)-methylguanosine(37) in tRNA + S-adenosyl-L-homocysteine + H(+). In terms of biological role, specifically methylates guanosine-37 in various tRNAs. This is tRNA (guanine-N(1)-)-methyltransferase from Chlamydia trachomatis serovar L2 (strain ATCC VR-902B / DSM 19102 / 434/Bu).